A 214-amino-acid chain; its full sequence is MKIKLAFAVLLALCLSLSVMPVLAEQAATRADLARYYDDVTSLQGRFTQQTHDESGRILEESSGEFWIERPDRFRWNYAEPWPQEIVSDGERLWVYDQDLDQVTVRSLADSLGRGPATLLGGTLGELEEAFELTFPEPGRVALQPREATLDYEHVLLRLEDGVPVELELEDGLGQITVLRLEALERDVEIDPGRFEFQPPEGADVIEAGGGRTL.

Positions 1–24 (MKIKLAFAVLLALCLSLSVMPVLA) are cleaved as a signal peptide.

The protein belongs to the LolA family. Monomer.

It localises to the periplasm. Its function is as follows. Participates in the translocation of lipoproteins from the inner membrane to the outer membrane. Only forms a complex with a lipoprotein if the residue after the N-terminal Cys is not an aspartate (The Asp acts as a targeting signal to indicate that the lipoprotein should stay in the inner membrane). The chain is Outer-membrane lipoprotein carrier protein from Alkalilimnicola ehrlichii (strain ATCC BAA-1101 / DSM 17681 / MLHE-1).